Here is a 723-residue protein sequence, read N- to C-terminus: Ribosome quality control complex subunit 1 (723 aa).

Residues 21–125 (SNSNANKMTS…DKGSDDDDDD (105 aa)) form a disordered region. Residues 27–37 (KMTSGKSTAGN) show a composition bias toward polar residues. Positions 93-108 (SSRRKKNKKAKRKQKN) are enriched in basic residues. Basic and acidic residues predominate over residues 109–118 (HTAEAAKDKG). S119 is modified (phosphoserine). T158 is subject to Phosphothreonine. Phosphoserine is present on S160.

It belongs to the TCF25 family. In terms of assembly, component of the ribosome quality control complex (RQC), composed of the E3 ubiquitin ligase RKR1/LTN1, RQC1 and RQC2, as well as CDC48 and its ubiquitin-binding cofactors. RQC forms a stable complex with 60S ribosomal subunits.

It is found in the cytoplasm. Functionally, component of the ribosome quality control complex (RQC), a ribosome-associated complex that mediates ubiquitination and extraction of incompletely synthesized nascent chains for proteasomal degradation. Within the RQC complex, RQC1 is essential for the recruitment of CDC48 to incompletely synthesized nascent polypeptides that are ubiquitinated by RKR1/LTN1. This Saccharomyces cerevisiae (strain ATCC 204508 / S288c) (Baker's yeast) protein is Ribosome quality control complex subunit 1.